Consider the following 215-residue polypeptide: Cytochrome b6 (215 aa).

The chain crosses the membrane as a helical span at residues 32 to 52; that stretch reads IFYCLGGITFTSFLVQVATGF. C35 contributes to the heme c binding site. Heme b contacts are provided by H86 and H100. 3 helical membrane passes run 90-110, 116-136, and 186-206; these read ASMM…TGGF, LTWV…VTGY, and LHTF…FLMI. 2 residues coordinate heme b: H187 and H202.

This sequence belongs to the cytochrome b family. PetB subfamily. In terms of assembly, the 4 large subunits of the cytochrome b6-f complex are cytochrome b6, subunit IV (17 kDa polypeptide, PetD), cytochrome f and the Rieske protein, while the 4 small subunits are PetG, PetL, PetM and PetN. The complex functions as a dimer. Heme b serves as cofactor. The cofactor is heme c.

The protein localises to the plastid. Its subcellular location is the chloroplast thylakoid membrane. Functionally, component of the cytochrome b6-f complex, which mediates electron transfer between photosystem II (PSII) and photosystem I (PSI), cyclic electron flow around PSI, and state transitions. This Oltmannsiellopsis viridis (Marine flagellate) protein is Cytochrome b6.